Reading from the N-terminus, the 339-residue chain is Ribosomal RNA small subunit methyltransferase H (339 aa).

S-adenosyl-L-methionine is bound by residues 52-54 (GGH), aspartate 71, phenylalanine 98, aspartate 130, and glutamine 137.

The protein belongs to the methyltransferase superfamily. RsmH family.

It is found in the cytoplasm. The catalysed reaction is cytidine(1402) in 16S rRNA + S-adenosyl-L-methionine = N(4)-methylcytidine(1402) in 16S rRNA + S-adenosyl-L-homocysteine + H(+). Its function is as follows. Specifically methylates the N4 position of cytidine in position 1402 (C1402) of 16S rRNA. This Corynebacterium diphtheriae (strain ATCC 700971 / NCTC 13129 / Biotype gravis) protein is Ribosomal RNA small subunit methyltransferase H.